The primary structure comprises 296 residues: Homoserine kinase (296 aa).

85-95 (PLSRGLGSSAA) provides a ligand contact to ATP.

The protein belongs to the GHMP kinase family. Homoserine kinase subfamily.

Its subcellular location is the cytoplasm. It carries out the reaction L-homoserine + ATP = O-phospho-L-homoserine + ADP + H(+). Its pathway is amino-acid biosynthesis; L-threonine biosynthesis; L-threonine from L-aspartate: step 4/5. Catalyzes the ATP-dependent phosphorylation of L-homoserine to L-homoserine phosphate. This Clostridium acetobutylicum (strain ATCC 824 / DSM 792 / JCM 1419 / IAM 19013 / LMG 5710 / NBRC 13948 / NRRL B-527 / VKM B-1787 / 2291 / W) protein is Homoserine kinase.